A 457-amino-acid polypeptide reads, in one-letter code: Methylphosphonate synthase (457 aa).

Residues 23–74 (ILNDIKRRPEDAANELGVSIEEINSIISGKQKISPSLIEKAVNIWPVNERDF) form the HTH cro/C1-type 1 domain. Positions 32 to 50 (EDAANELGVSIEEINSIIS) form a DNA-binding region, H-T-H motif. Fe cation is bound by residues H148 and H190. The HTH cro/C1-type 2 domain occupies 247 to 301 (LEYYFELSNLTKEKFAKRTNFSMETLADFFTKKKLPTFDELKIIAKALNVNSRDL). Positions 258–277 (KEKFAKRTNFSMETLADFFT) form a DNA-binding region, H-T-H motif.

The protein belongs to the non-heme iron-dependent dioxygenase family. It depends on Fe(2+) as a cofactor.

It carries out the reaction 2-hydroxyethylphosphonate + O2 = methylphosphonate + hydrogencarbonate + H(+). It functions in the pathway phosphorus metabolism; phosphonate biosynthesis. Catalyzes the conversion of 2-hydroxyethylphosphonate into methylphosphonate in the methylphosphonate biosynthesis pathway. In Nitrosopumilus maritimus (strain SCM1), this protein is Methylphosphonate synthase (mpnS).